The following is a 174-amino-acid chain: Imidazole glycerol phosphate synthase subunit HisH (174 aa).

The region spanning 2–174 (SVVIINTGCA…AAVNKDNFWR (173 aa)) is the Glutamine amidotransferase type-1 domain. Cys77 serves as the catalytic Nucleophile.

As to quaternary structure, heterodimer of HisH and HisF.

It is found in the cytoplasm. The catalysed reaction is 5-[(5-phospho-1-deoxy-D-ribulos-1-ylimino)methylamino]-1-(5-phospho-beta-D-ribosyl)imidazole-4-carboxamide + L-glutamine = D-erythro-1-(imidazol-4-yl)glycerol 3-phosphate + 5-amino-1-(5-phospho-beta-D-ribosyl)imidazole-4-carboxamide + L-glutamate + H(+). It catalyses the reaction L-glutamine + H2O = L-glutamate + NH4(+). It participates in amino-acid biosynthesis; L-histidine biosynthesis; L-histidine from 5-phospho-alpha-D-ribose 1-diphosphate: step 5/9. In terms of biological role, IGPS catalyzes the conversion of PRFAR and glutamine to IGP, AICAR and glutamate. The HisH subunit catalyzes the hydrolysis of glutamine to glutamate and ammonia as part of the synthesis of IGP and AICAR. The resulting ammonia molecule is channeled to the active site of HisF. This is Imidazole glycerol phosphate synthase subunit HisH (hisH) from Buchnera aphidicola subsp. Schlechtendalia chinensis.